Consider the following 562-residue polypeptide: MRSNMIKKGPEQAPARSLLHATGQIKSPEDMNKPFIAICNSYIDIVPGHVHLRELADIAKEAIREAGGIPFEFNTIGVDDGIAMGHIGMRYSLPSREIIADAAETVINAHWFDGVFYIPNCDKITPGMLLAAVRTNVPAIFCSGGPMKAGLSATGKALTLSSMFEAVGAFKEGTLTKEDFLDMEQNACPTCGSCAGMFTANSMNCLMEVLGLALPFNGTALAVSKERRALIRESAFKLMDLVKRDIKPKDIVTKEAIDDAFALDMAMGGSTNTVLHTLALANEAGIDYDLERINEIAEKTPYLSKIAPSSSYSMHDVHTAGGVPAIINELMKREGILHPDRMTVTGDTLRDNNAAYTIQNEEVIHTLDNPYSEHGGLSMLHGNIAPLGGVIKVGGVDPSIQTFTGAAICFDSHDAAVAAIDNHTVRPGHVVVIRYEGPKGGPGMPEMLAPTSSIVGRGLGKEVALITDGRFSGATRGIAVGHISPEAAALGPIALIEDGDMVTIDLVHRTLNVDVTDDELKQRKARLQPFKAKVKSGYLARYTALVTSANTGGVMQIPEHLL.

Aspartate 80 provides a ligand contact to Mg(2+). Cysteine 121 contacts [2Fe-2S] cluster. Residues aspartate 122 and lysine 123 each coordinate Mg(2+). Position 123 is an N6-carboxylysine (lysine 123). Position 194 (cysteine 194) interacts with [2Fe-2S] cluster. Residue glutamate 446 coordinates Mg(2+). Serine 472 serves as the catalytic Proton acceptor.

This sequence belongs to the IlvD/Edd family. In terms of assembly, homodimer. [2Fe-2S] cluster serves as cofactor. It depends on Mg(2+) as a cofactor.

It carries out the reaction (2R)-2,3-dihydroxy-3-methylbutanoate = 3-methyl-2-oxobutanoate + H2O. It catalyses the reaction (2R,3R)-2,3-dihydroxy-3-methylpentanoate = (S)-3-methyl-2-oxopentanoate + H2O. Its pathway is amino-acid biosynthesis; L-isoleucine biosynthesis; L-isoleucine from 2-oxobutanoate: step 3/4. It participates in amino-acid biosynthesis; L-valine biosynthesis; L-valine from pyruvate: step 3/4. Functions in the biosynthesis of branched-chain amino acids. Catalyzes the dehydration of (2R,3R)-2,3-dihydroxy-3-methylpentanoate (2,3-dihydroxy-3-methylvalerate) into 2-oxo-3-methylpentanoate (2-oxo-3-methylvalerate) and of (2R)-2,3-dihydroxy-3-methylbutanoate (2,3-dihydroxyisovalerate) into 2-oxo-3-methylbutanoate (2-oxoisovalerate), the penultimate precursor to L-isoleucine and L-valine, respectively. This chain is Dihydroxy-acid dehydratase, found in Macrococcus caseolyticus (strain JCSC5402) (Macrococcoides caseolyticum).